Here is a 355-residue protein sequence, read N- to C-terminus: Holliday junction branch migration complex subunit RuvB (355 aa).

Positions 1–193 (MGRFSEDSAD…FGFTAHMDFY (193 aa)) are large ATPase domain (RuvB-L). ATP contacts are provided by residues Leu-32, Arg-33, Gly-74, Lys-77, Thr-78, Ser-79, 140-142 (EDF), Arg-183, Tyr-193, and Arg-230. Thr-78 lines the Mg(2+) pocket. A small ATPAse domain (RuvB-S) region spans residues 194–264 (EPSELERVLA…IAKYALEVYD (71 aa)). The head domain (RuvB-H) stretch occupies residues 267–355 (ELGLDRLDRA…VGLGQTGLFD (89 aa)). Residues Arg-322 and Arg-327 each coordinate DNA.

Belongs to the RuvB family. Homohexamer. Forms an RuvA(8)-RuvB(12)-Holliday junction (HJ) complex. HJ DNA is sandwiched between 2 RuvA tetramers; dsDNA enters through RuvA and exits via RuvB. An RuvB hexamer assembles on each DNA strand where it exits the tetramer. Each RuvB hexamer is contacted by two RuvA subunits (via domain III) on 2 adjacent RuvB subunits; this complex drives branch migration. In the full resolvosome a probable DNA-RuvA(4)-RuvB(12)-RuvC(2) complex forms which resolves the HJ.

It localises to the cytoplasm. It catalyses the reaction ATP + H2O = ADP + phosphate + H(+). Functionally, the RuvA-RuvB-RuvC complex processes Holliday junction (HJ) DNA during genetic recombination and DNA repair, while the RuvA-RuvB complex plays an important role in the rescue of blocked DNA replication forks via replication fork reversal (RFR). RuvA specifically binds to HJ cruciform DNA, conferring on it an open structure. The RuvB hexamer acts as an ATP-dependent pump, pulling dsDNA into and through the RuvAB complex. RuvB forms 2 homohexamers on either side of HJ DNA bound by 1 or 2 RuvA tetramers; 4 subunits per hexamer contact DNA at a time. Coordinated motions by a converter formed by DNA-disengaged RuvB subunits stimulates ATP hydrolysis and nucleotide exchange. Immobilization of the converter enables RuvB to convert the ATP-contained energy into a lever motion, pulling 2 nucleotides of DNA out of the RuvA tetramer per ATP hydrolyzed, thus driving DNA branch migration. The RuvB motors rotate together with the DNA substrate, which together with the progressing nucleotide cycle form the mechanistic basis for DNA recombination by continuous HJ branch migration. Branch migration allows RuvC to scan DNA until it finds its consensus sequence, where it cleaves and resolves cruciform DNA. The polypeptide is Holliday junction branch migration complex subunit RuvB (Mycolicibacterium vanbaalenii (strain DSM 7251 / JCM 13017 / BCRC 16820 / KCTC 9966 / NRRL B-24157 / PYR-1) (Mycobacterium vanbaalenii)).